The chain runs to 246 residues: Pyridoxine 5'-phosphate synthase (246 aa).

A 3-amino-2-oxopropyl phosphate-binding site is contributed by N12. 14–15 (DH) contacts 1-deoxy-D-xylulose 5-phosphate. A 3-amino-2-oxopropyl phosphate-binding site is contributed by R23. Residue H48 is the Proton acceptor of the active site. 1-deoxy-D-xylulose 5-phosphate-binding residues include R50 and H55. The active-site Proton acceptor is the E75. Residue T105 participates in 1-deoxy-D-xylulose 5-phosphate binding. Residue H196 is the Proton donor of the active site. Residues G197 and 218 to 219 (GH) contribute to the 3-amino-2-oxopropyl phosphate site.

This sequence belongs to the PNP synthase family. As to quaternary structure, homooctamer; tetramer of dimers.

Its subcellular location is the cytoplasm. The enzyme catalyses 3-amino-2-oxopropyl phosphate + 1-deoxy-D-xylulose 5-phosphate = pyridoxine 5'-phosphate + phosphate + 2 H2O + H(+). It participates in cofactor biosynthesis; pyridoxine 5'-phosphate biosynthesis; pyridoxine 5'-phosphate from D-erythrose 4-phosphate: step 5/5. Its function is as follows. Catalyzes the complicated ring closure reaction between the two acyclic compounds 1-deoxy-D-xylulose-5-phosphate (DXP) and 3-amino-2-oxopropyl phosphate (1-amino-acetone-3-phosphate or AAP) to form pyridoxine 5'-phosphate (PNP) and inorganic phosphate. This is Pyridoxine 5'-phosphate synthase from Pseudomonas putida (strain W619).